Consider the following 70-residue polypeptide: SPbeta prophage-derived uncharacterized protein YorZ (70 aa).

This is SPbeta prophage-derived uncharacterized protein YorZ (yorZ) from Bacillus subtilis (strain 168).